A 166-amino-acid chain; its full sequence is Transcription antitermination protein NusB (166 aa).

Residues 1-18 (MISDESDRFNPRDPKPAD) show a composition bias toward basic and acidic residues. The interval 1–28 (MISDESDRFNPRDPKPADAGKPSKSAKR) is disordered.

It belongs to the NusB family.

Functionally, involved in transcription antitermination. Required for transcription of ribosomal RNA (rRNA) genes. Binds specifically to the boxA antiterminator sequence of the ribosomal RNA (rrn) operons. This chain is Transcription antitermination protein NusB, found in Pseudomonas putida (strain W619).